Consider the following 635-residue polypeptide: Cationic amino acid transporter 2, vacuolar (635 aa).

The Cytoplasmic segment spans residues 1 to 48; the sequence is MGFLVDTQKEGGGHSWGYVRSLVRRKQVDSANGQSHGHQLARALTVPH. Residues 49–69 form a helical membrane-spanning segment; it reads LVAIGVGATIGAGVYILVGTV. Residues 70–76 lie on the Vacuolar side of the membrane; that stretch reads AREHSGP. A helical transmembrane segment spans residues 77–97; sequence SLALSFLIAGIAAGLSAFCYA. Residues 98 to 108 are Cytoplasmic-facing; the sequence is ELSSRCPSAGS. The helical transmembrane segment at 109–131 threads the bilayer; the sequence is AYHYSYICVGEGVAWIIGWALIL. The Vacuolar segment spans residues 132 to 171; sequence EYTIGGSAVARGISPNLALIFGGEDGLPAILARHQIPGLD. A helical transmembrane segment spans residues 172 to 192; the sequence is IVVDPCAAILVFVVTGLLCMG. Over 193–200 the chain is Cytoplasmic; sequence IKESTFAQ. Residues 201 to 221 form a helical membrane-spanning segment; sequence GIVTAVNVCVLLFVIVAGSYL. Topologically, residues 222 to 235 are vacuolar; sequence GFKTGWPGYELPTG. Residues 236–256 traverse the membrane as a helical segment; the sequence is FFPFGVDGMFAGSATVFFAFI. Over 257-280 the chain is Cytoplasmic; the sequence is GFDSVASTAEEVRNPQRDLPIGIG. The chain crosses the membrane as a helical span at residues 281-301; it reads LALLLCCSLYMMVSIVIVGLI. The Vacuolar segment spans residues 302 to 324; that stretch reads PYYAMDPDTPISSAFASHDMQWA. Residues 325-345 traverse the membrane as a helical segment; that stretch reads VYLITLGAVMALCSALMGALL. Over 346–376 the chain is Cytoplasmic; sequence PQPRILMAMARDGLLPSIFSDINKRTQVPVK. The chain crosses the membrane as a helical span at residues 377–397; the sequence is ATVATGLCAATLAFFMDVSQL. A topological domain (vacuolar) is located at residue Ala398. Residues 399 to 419 traverse the membrane as a helical segment; it reads GMVSVGTLLAFTMVAISVLIL. The Cytoplasmic segment spans residues 420-493; sequence RYVPPDEQPL…CLVLSEETRR (74 aa). The chain crosses the membrane as a helical span at residues 494–514; sequence IVAGWSIMFTCVGAFLLSYAA. Residues 515-524 are Vacuolar-facing; sequence SSLSFPGLIR. The helical transmembrane segment at 525 to 545 threads the bilayer; it reads YPLCGVGGCLLLAGLIALSSI. Residues 546–560 are Cytoplasmic-facing; it reads DQDDARHTFGHSGGY. A helical transmembrane segment spans residues 561 to 581; that stretch reads MCPFVPLLPIICILINMYLLV. Residues 582 to 585 are Vacuolar-facing; it reads NLGS. Residues 586-606 traverse the membrane as a helical segment; the sequence is ATWARVSVWLLIGVIVYVFYG. Residues 607–635 are Cytoplasmic-facing; the sequence is RKNSSLANAVYVTTAHAEEIYREHEGSLA.

It belongs to the amino acid-polyamine-organocation (APC) superfamily. Cationic amino acid transporter (CAT) (TC 2.A.3.3) family. In terms of tissue distribution, expressed in roots, stems, flowers, leaves, and siliques.

It localises to the vacuole membrane. In terms of biological role, permease involved in the transport of the cationic amino acids. This is Cationic amino acid transporter 2, vacuolar (CAT2) from Arabidopsis thaliana (Mouse-ear cress).